A 162-amino-acid chain; its full sequence is Large ribosomal subunit protein eL24 (162 aa).

Disordered stretches follow at residues 64–83 (DIHA…PYSR) and 117–162 (ERIK…GGKR). Over residues 71 to 81 (KKRRRTTKKPY) the composition is skewed to basic residues. A compositionally biased stretch (basic and acidic residues) spans 117–135 (ERIKKTKDEKKAKKAEVTK).

This sequence belongs to the eukaryotic ribosomal protein eL24 family.

Its subcellular location is the cytoplasm. This Hordeum vulgare (Barley) protein is Large ribosomal subunit protein eL24 (RPL24).